A 669-amino-acid polypeptide reads, in one-letter code: Threonine--tRNA ligase (669 aa).

Positions 3-60 constitute a TGS domain; it reads DAQQITLLVDGEETKVTTGTTGAELFFERRDVVVARVNGELKDLDQELPEGAEVEGVT. The tract at residues 260–566 is catalytic; that stretch reads DHRKLGSELD…LTEHYAGAFP (307 aa). Zn(2+) is bound by residues Cys365, His416, and His543.

This sequence belongs to the class-II aminoacyl-tRNA synthetase family. As to quaternary structure, homodimer. Zn(2+) is required as a cofactor.

It is found in the cytoplasm. It catalyses the reaction tRNA(Thr) + L-threonine + ATP = L-threonyl-tRNA(Thr) + AMP + diphosphate + H(+). Catalyzes the attachment of threonine to tRNA(Thr) in a two-step reaction: L-threonine is first activated by ATP to form Thr-AMP and then transferred to the acceptor end of tRNA(Thr). Also edits incorrectly charged L-seryl-tRNA(Thr). This Pseudarthrobacter chlorophenolicus (strain ATCC 700700 / DSM 12829 / CIP 107037 / JCM 12360 / KCTC 9906 / NCIMB 13794 / A6) (Arthrobacter chlorophenolicus) protein is Threonine--tRNA ligase.